Reading from the N-terminus, the 38-residue chain is Photosystem II reaction center protein L (38 aa).

The helical transmembrane segment at 17–37 (SLYWGLLLIFVLAVLFSSYFF) threads the bilayer.

The protein belongs to the PsbL family. In terms of assembly, PSII is composed of 1 copy each of membrane proteins PsbA, PsbB, PsbC, PsbD, PsbE, PsbF, PsbH, PsbI, PsbJ, PsbK, PsbL, PsbM, PsbT, PsbX, PsbY, PsbZ, Psb30/Ycf12, at least 3 peripheral proteins of the oxygen-evolving complex and a large number of cofactors. It forms dimeric complexes.

The protein localises to the plastid. It localises to the chloroplast thylakoid membrane. Functionally, one of the components of the core complex of photosystem II (PSII). PSII is a light-driven water:plastoquinone oxidoreductase that uses light energy to abstract electrons from H(2)O, generating O(2) and a proton gradient subsequently used for ATP formation. It consists of a core antenna complex that captures photons, and an electron transfer chain that converts photonic excitation into a charge separation. This subunit is found at the monomer-monomer interface and is required for correct PSII assembly and/or dimerization. This chain is Photosystem II reaction center protein L, found in Thalassiosira pseudonana (Marine diatom).